The primary structure comprises 406 residues: Tryptophan synthase beta chain (406 aa).

Position 95 is an N6-(pyridoxal phosphate)lysine (Lys95).

Belongs to the TrpB family. Tetramer of two alpha and two beta chains. The cofactor is pyridoxal 5'-phosphate.

The catalysed reaction is (1S,2R)-1-C-(indol-3-yl)glycerol 3-phosphate + L-serine = D-glyceraldehyde 3-phosphate + L-tryptophan + H2O. Its pathway is amino-acid biosynthesis; L-tryptophan biosynthesis; L-tryptophan from chorismate: step 5/5. Its function is as follows. The beta subunit is responsible for the synthesis of L-tryptophan from indole and L-serine. This is Tryptophan synthase beta chain from Azotobacter vinelandii (strain DJ / ATCC BAA-1303).